We begin with the raw amino-acid sequence, 417 residues long: Frizzy aggregation protein FrzCD (417 aa).

Residues 1–11 are compositionally biased toward basic and acidic residues; the sequence is MSLDTPNEKPA. A disordered region spans residues 1–34; the sequence is MSLDTPNEKPAGKARARKAPASKAGATNAASTSS. Low complexity predominate over residues 21–34; sequence ASKAGATNAASTSS. A Methyl-accepting transducer domain is found at 144 to 380; sequence AALRLSSSAN…QVVASMAEIE (237 aa).

It belongs to the methyl-accepting chemotaxis (MCP) protein family. In terms of processing, methylated. Saturated fatty acids capric acid and lauric acid stimulate methylation. Short-chain alcohols, such as isoamyl alcohol, and some other solvents cause demethylation.

The protein localises to the cytoplasm. Methyl-accepting taxis protein necessary for the proper aggregation of cells to form fruiting bodies. Frz genes define a system of signal transduction analogous to the enterobacterial chemotaxis systems. This is Frizzy aggregation protein FrzCD (frzCD) from Myxococcus xanthus.